Here is a 461-residue protein sequence, read N- to C-terminus: ATP synthase subunit beta 2 (461 aa).

ATP is bound at residue 151–158 (GGAGVGKT).

Belongs to the ATPase alpha/beta chains family. As to quaternary structure, F-type ATPases have 2 components, CF(1) - the catalytic core - and CF(0) - the membrane proton channel. CF(1) has five subunits: alpha(3), beta(3), gamma(1), delta(1), epsilon(1). CF(0) has three main subunits: a(1), b(2) and c(9-12). The alpha and beta chains form an alternating ring which encloses part of the gamma chain. CF(1) is attached to CF(0) by a central stalk formed by the gamma and epsilon chains, while a peripheral stalk is formed by the delta and b chains.

It localises to the cell inner membrane. The enzyme catalyses ATP + H2O + 4 H(+)(in) = ADP + phosphate + 5 H(+)(out). Functionally, produces ATP from ADP in the presence of a proton gradient across the membrane. The catalytic sites are hosted primarily by the beta subunits. The protein is ATP synthase subunit beta 2 of Pseudoalteromonas atlantica (strain T6c / ATCC BAA-1087).